The primary structure comprises 259 residues: uncharacterized protein (259 aa).

3 disordered regions span residues 22–68 (GLQP…VSFG), 111–133 (REEQ…DEVE), and 181–202 (LGGK…KKKQ). The segment covering 50-63 (NEEEDAISDMEDKE) has biased composition (acidic residues). The residue at position 127 (Ser-127) is a Phosphoserine.

This is an uncharacterized protein from Schizosaccharomyces pombe (strain 972 / ATCC 24843) (Fission yeast).